A 50-amino-acid chain; its full sequence is Kappa-actitoxin-Bcs4a (50 aa).

It belongs to the sea anemone type 5 potassium channel toxin family. Contains 4 disulfide bonds.

It is found in the secreted. The protein resides in the nematocyst. Functionally, inhibits voltage-gated potassium channels (Kv1/KCNA). Is potent on Drosophila Shaker IR channels (IC(50)=94.25 nM), and rKv1.2/KCNA2 (IC(50)=172.59 nM), and moderately active on hKv1.3/KCNA3 (IC(50)=1006.48 nM), rKv1.6/KCNA6 (IC(50)=2245.93 nM), and Kv1.1/KCNA1 (IC(50) around 3 uM). In vivo, induces a rapid increase in swimming speed on zebrafish larvae, as well as death which occurs between 2 and 18 hours later. Also paralyzes swimming crabs (C.danae) when injected at the junction between the body and the walking leg. In Bunodosoma caissarum (Sea anemone), this protein is Kappa-actitoxin-Bcs4a.